Here is a 243-residue protein sequence, read N- to C-terminus: 23S rRNA (guanosine-2'-O-)-methyltransferase RlmB (243 aa).

S-adenosyl-L-methionine is bound by residues G196, I216, and L225.

This sequence belongs to the class IV-like SAM-binding methyltransferase superfamily. RNA methyltransferase TrmH family. RlmB subfamily. As to quaternary structure, homodimer.

It is found in the cytoplasm. It carries out the reaction guanosine(2251) in 23S rRNA + S-adenosyl-L-methionine = 2'-O-methylguanosine(2251) in 23S rRNA + S-adenosyl-L-homocysteine + H(+). Functionally, specifically methylates the ribose of guanosine 2251 in 23S rRNA. This is 23S rRNA (guanosine-2'-O-)-methyltransferase RlmB from Salmonella typhi.